Here is a 980-residue protein sequence, read N- to C-terminus: Alanine--tRNA ligase, mitochondrial (980 aa).

The N-terminal 23 residues, 1-23 (MAVALAAAAGKLRRAIGRSCPWQ), are a transit peptide targeting the mitochondrion. Residues arginine 105, histidine 123, tryptophan 205, and 235 to 237 (LWN) each bind ATP. Positions 237 and 260 each coordinate L-alanine. Residue glycine 264 coordinates ATP. Histidine 627, histidine 631, cysteine 744, and histidine 748 together coordinate Zn(2+).

This sequence belongs to the class-II aminoacyl-tRNA synthetase family. In terms of assembly, monomer. It depends on Zn(2+) as a cofactor.

The protein resides in the mitochondrion. It catalyses the reaction tRNA(Ala) + L-alanine + ATP = L-alanyl-tRNA(Ala) + AMP + diphosphate. The enzyme catalyses (S)-lactate + ATP + H(+) = (S)-lactoyl-AMP + diphosphate. It carries out the reaction (S)-lactoyl-AMP + L-lysyl-[protein] = N(6)-[(S)-lactoyl]-L-lysyl-[protein] + AMP + 2 H(+). Functionally, catalyzes the attachment of alanine to tRNA(Ala) in a two-step reaction: alanine is first activated by ATP to form Ala-AMP and then transferred to the acceptor end of tRNA(Ala). Also edits incorrectly charged tRNA(Ala) via its editing domain. In presence of high levels of lactate, also acts as a protein lactyltransferase that mediates lactylation of lysine residues in target proteins, such as CGAS. Acts as an inhibitor of cGAS/STING signaling by catalyzing lactylation of CGAS, preventing the formation of liquid-like droplets in which CGAS is activated. The polypeptide is Alanine--tRNA ligase, mitochondrial (Aars2) (Mus musculus (Mouse)).